A 738-amino-acid chain; its full sequence is Protostadienol synthase A (738 aa).

The PFTB 1 repeat unit spans residues 132–173; it reads KQEMCRYLLNVVNEDGGWGLFIQSPSTVFGTVMNYCMLRILG. Aspartate 463 serves as the catalytic Proton donor. PFTB repeat units follow at residues 490–531, 567–607, and 616–663; these read LQQA…YENV, VSRS…ACMG, and CQRA…AVIG.

The protein belongs to the terpene cyclase/mutase family.

The catalysed reaction is (S)-2,3-epoxysqualene = (17Z)-protosta-17(20),24-dien-3beta-ol. Protostadienol synthase which cyclizes (3S)-oxidosqualene to (17Z)-protosta-17(20),24-dien-3-beta-ol (protostadienol), the biosynthetic precursor of helvolic acid, a secondary metabolite which promotes virulence. The sequence is that of Protostadienol synthase A (pdsA) from Neosartorya fischeri (strain ATCC 1020 / DSM 3700 / CBS 544.65 / FGSC A1164 / JCM 1740 / NRRL 181 / WB 181) (Aspergillus fischerianus).